A 185-amino-acid polypeptide reads, in one-letter code: Small ribosomal subunit protein uS4 (185 aa).

The S4 RNA-binding domain occupies 107-179; that stretch reads RRLQTLVYRK…NGRRKRKNNH (73 aa). The tract at residues 161 to 185 is disordered; that stretch reads NTPLTNPEINGRRKRKNNHAGKEDN.

The protein belongs to the universal ribosomal protein uS4 family.

This chain is Small ribosomal subunit protein uS4, found in Entamoeba histolytica (strain ATCC 30459 / HM-1:IMSS / ABRM).